The following is a 159-amino-acid chain: Cyclic pyranopterin monophosphate synthase (159 aa).

Substrate-binding positions include 75-77 (LCH) and 113-114 (ME). Residue aspartate 128 is part of the active site.

Belongs to the MoaC family. As to quaternary structure, homohexamer; trimer of dimers.

The catalysed reaction is (8S)-3',8-cyclo-7,8-dihydroguanosine 5'-triphosphate = cyclic pyranopterin phosphate + diphosphate. It participates in cofactor biosynthesis; molybdopterin biosynthesis. In terms of biological role, catalyzes the conversion of (8S)-3',8-cyclo-7,8-dihydroguanosine 5'-triphosphate to cyclic pyranopterin monophosphate (cPMP). This is Cyclic pyranopterin monophosphate synthase from Yersinia pseudotuberculosis serotype O:3 (strain YPIII).